Here is a 116-residue protein sequence, read N- to C-terminus: Prefoldin subunit beta (116 aa).

It belongs to the prefoldin subunit beta family. Heterohexamer of two alpha and four beta subunits.

Its subcellular location is the cytoplasm. Functionally, molecular chaperone capable of stabilizing a range of proteins. Seems to fulfill an ATP-independent, HSP70-like function in archaeal de novo protein folding. The polypeptide is Prefoldin subunit beta (Thermococcus onnurineus (strain NA1)).